The following is a 336-amino-acid chain: Probable GTPase MT1543 (336 aa).

GTP contacts are provided by residues glycine 67–threonine 75, aspartate 209, and serine 245–valine 247.

This sequence belongs to the SIMIBI class G3E GTPase family. ArgK/MeaB subfamily. Homodimer.

Probable GTPase. May also bind and hydrolyze ATP. May function as chaperone. The chain is Probable GTPase MT1543 from Mycobacterium tuberculosis (strain CDC 1551 / Oshkosh).